The primary structure comprises 315 residues: Transaldolase (315 aa).

The Schiff-base intermediate with substrate role is filled by K125.

The protein belongs to the transaldolase family. Type 1 subfamily. As to quaternary structure, homodimer.

The protein resides in the cytoplasm. The enzyme catalyses D-sedoheptulose 7-phosphate + D-glyceraldehyde 3-phosphate = D-erythrose 4-phosphate + beta-D-fructose 6-phosphate. The protein operates within carbohydrate degradation; pentose phosphate pathway; D-glyceraldehyde 3-phosphate and beta-D-fructose 6-phosphate from D-ribose 5-phosphate and D-xylulose 5-phosphate (non-oxidative stage): step 2/3. Its function is as follows. Transaldolase is important for the balance of metabolites in the pentose-phosphate pathway. This chain is Transaldolase, found in Polaromonas naphthalenivorans (strain CJ2).